We begin with the raw amino-acid sequence, 474 residues long: Chromosomal replication initiator protein DnaA (474 aa).

Residues 1–90 (MSSSLWLQCL…RQVVVPSSQI (90 aa)) are domain I, interacts with DnaA modulators. Residues 91–137 (IAPAAPAVTLAPRPLPATRILQDDAPSRSWEPAPSPVQPESKSGYRS) are domain II. The interval 112-137 (QDDAPSRSWEPAPSPVQPESKSGYRS) is disordered. Positions 128-137 (QPESKSGYRS) are enriched in polar residues. Positions 138–354 (NVNPKHNFNN…GALNRVIANA (217 aa)) are domain III, AAA+ region. The ATP site is built by Gly182, Gly184, Lys185, and Thr186. Residues 355–474 (NFTGRAITID…YSNLIRTLST (120 aa)) form a domain IV, binds dsDNA region.

It belongs to the DnaA family. Oligomerizes as a right-handed, spiral filament on DNA at oriC.

The protein resides in the cytoplasm. Functionally, plays an essential role in the initiation and regulation of chromosomal replication. ATP-DnaA binds to the origin of replication (oriC) to initiate formation of the DNA replication initiation complex once per cell cycle. Binds the DnaA box (a 9 base pair repeat at the origin) and separates the double-stranded (ds)DNA. Forms a right-handed helical filament on oriC DNA; dsDNA binds to the exterior of the filament while single-stranded (ss)DNA is stabiized in the filament's interior. The ATP-DnaA-oriC complex binds and stabilizes one strand of the AT-rich DNA unwinding element (DUE), permitting loading of DNA polymerase. After initiation quickly degrades to an ADP-DnaA complex that is not apt for DNA replication. Binds acidic phospholipids. The chain is Chromosomal replication initiator protein DnaA from Photobacterium profundum (strain SS9).